Consider the following 120-residue polypeptide: Large ribosomal subunit protein bL12 (120 aa).

Belongs to the bacterial ribosomal protein bL12 family. Homodimer. Part of the ribosomal stalk of the 50S ribosomal subunit. Forms a multimeric L10(L12)X complex, where L10 forms an elongated spine to which 2 to 4 L12 dimers bind in a sequential fashion. Binds GTP-bound translation factors.

Functionally, forms part of the ribosomal stalk which helps the ribosome interact with GTP-bound translation factors. Is thus essential for accurate translation. The chain is Large ribosomal subunit protein bL12 from Alkaliphilus metalliredigens (strain QYMF).